The sequence spans 60 residues: UPF0391 membrane protein CCNA_00709 (60 aa).

A run of 2 helical transmembrane segments spans residues 4–24 and 33–53; these read WAII…SGLA and ILFF…GTVF.

This sequence belongs to the UPF0391 family.

It localises to the cell membrane. This is UPF0391 membrane protein CCNA_00709 from Caulobacter vibrioides (strain NA1000 / CB15N) (Caulobacter crescentus).